The chain runs to 175 residues: Protein-export protein SecB (175 aa).

The interval 154 to 175 (QQGGNNNGSDSGIILPPGTTRQ) is disordered.

It belongs to the SecB family. In terms of assembly, homotetramer, a dimer of dimers. One homotetramer interacts with 1 SecA dimer.

Its subcellular location is the cytoplasm. Functionally, one of the proteins required for the normal export of preproteins out of the cell cytoplasm. It is a molecular chaperone that binds to a subset of precursor proteins, maintaining them in a translocation-competent state. It also specifically binds to its receptor SecA. The chain is Protein-export protein SecB from Bordetella petrii (strain ATCC BAA-461 / DSM 12804 / CCUG 43448).